The chain runs to 380 residues: Cystathionine beta-lyase (380 aa).

K196 bears the N6-(pyridoxal phosphate)lysine mark.

Belongs to the trans-sulfuration enzymes family. It depends on pyridoxal 5'-phosphate as a cofactor.

It localises to the cytoplasm. The catalysed reaction is L,L-cystathionine + H2O = L-homocysteine + pyruvate + NH4(+). The enzyme catalyses an S-substituted L-cysteine + H2O = a thiol + pyruvate + NH4(+). Its pathway is amino-acid biosynthesis; L-methionine biosynthesis via de novo pathway; L-homocysteine from L-cystathionine: step 1/1. Functionally, the enzymatic degradation of amino acids in cheese is believed to generate aroma compounds and therefore to be essential for flavor development. Cystathionine beta-lyase (CBL) can convert cystathionine to homocysteine but is also able to catalyze an alpha, gamma elimination. With methionine as a substrate, it produces volatile sulfur compounds which are important for flavor formation in Gouda cheese. The protein is Cystathionine beta-lyase (metC) of Lactococcus lactis subsp. lactis (strain IL1403) (Streptococcus lactis).